The sequence spans 564 residues: 5-aminolevulinate synthase, mitochondrial (564 aa).

The transit peptide at 1-57 (MESITKVSMSVCPFVRSTSTQALRQLSQTSGALANQARQCPIAGNAIRAKEISIRSY) directs the protein to the mitochondrion. Substrate is bound by residues Arg113, Ser226, and Lys245. Residues Ser278, His306, and Thr350 each coordinate pyridoxal 5'-phosphate. Lys353 is a catalytic residue. Lys353 is subject to N6-(pyridoxal phosphate)lysine. Residues Thr382 and Thr383 each contribute to the pyridoxal 5'-phosphate site. Thr468 contacts substrate.

It belongs to the class-II pyridoxal-phosphate-dependent aminotransferase family. Homodimer. Pyridoxal 5'-phosphate serves as cofactor.

Its subcellular location is the mitochondrion matrix. It catalyses the reaction succinyl-CoA + glycine + H(+) = 5-aminolevulinate + CO2 + CoA. It participates in porphyrin-containing compound metabolism; protoporphyrin-IX biosynthesis; 5-aminolevulinate from glycine: step 1/1. In terms of biological role, catalyzes the synthesis of 5-aminolevulinate (ALA) from succinyl-CoA and glycine, the first and rate-limiting step in heme biosynthesis. In Candida albicans (strain SC5314 / ATCC MYA-2876) (Yeast), this protein is 5-aminolevulinate synthase, mitochondrial (HEM1).